Here is a 1582-residue protein sequence, read N- to C-terminus: ATP-binding cassette sub-family C member 8 (1582 aa).

The Extracellular portion of the chain corresponds to 1-30 (MPLAFCGTENHSAAYRVDQGVLNNGCFVDA). Cysteines 6 and 26 form a disulfide. Residue Asn10 is glycosylated (N-linked (GlcNAc...) asparagine). A helical transmembrane segment spans residues 31–47 (LNVVPHVFLLFITFPIL). Residues 48–72 (FIGWGSQSSKVHIHHSTWLHFPGHN) lie on the Cytoplasmic side of the membrane. A helical membrane pass occupies residues 73–89 (LRWILTFILLFVLVCEI). Residues 90 to 106 (AEGILSDGVTESRHLHL) lie on the Extracellular side of the membrane. A helical membrane pass occupies residues 107 to 123 (YMPAGMAFMAAITSVVY). Residues 124 to 136 (YHNIETSNFPKLL) lie on the Cytoplasmic side of the membrane. The helical transmembrane segment at 137-153 (IALLIYWTLAFITKTIK) threads the bilayer. Topologically, residues 154-169 (FVKFYDHAIGFSQLRF) are extracellular. Residues 170–186 (CLTGLLVILYGMLLLVE) traverse the membrane as a helical segment. Residues 187 to 303 (VNVIRVRRYI…AFGRRLILSS (117 aa)) lie on the Cytoplasmic side of the membrane. Positions 299–602 (LILSSTFRIL…LSSVVRSTVK (304 aa)) constitute an ABC transmembrane type-1 1 domain. A helical membrane pass occupies residues 304–319 (TFRILADLLGFAGPLC). Residues 320–356 (IFGIVDHLGKENHVFQPKTQFLGVYFVSSQEFLGNAY) lie on the Extracellular side of the membrane. A helical transmembrane segment spans residues 357 to 372 (VLAVLLFLALLLQRTF). The Cytoplasmic segment spans residues 373–438 (LQASYYVAIE…MWFFFLCPNL (66 aa)). The chain crosses the membrane as a helical span at residues 439 to 454 (WTMPVQIIVGVILLYY). The Extracellular portion of the chain corresponds to 455–460 (ILGVSA). The helical transmembrane segment at 461 to 473 (LIGAAVIILLAPV) threads the bilayer. Residues 474–541 (QYFVATKLSQ…SLRAFAVYTS (68 aa)) are Cytoplasmic-facing. The chain crosses the membrane as a helical span at residues 542–557 (ISIFMNTAIPIAAVLI). The Extracellular portion of the chain corresponds to 558–576 (TFVGHVSFFKESDLSPSVA). A helical transmembrane segment spans residues 577-592 (FASLSLFHILVTPLFL). Over 593–1013 (LSSVVRSTVK…YLSSAGILLL (421 aa)) the chain is Cytoplasmic. Positions 679-930 (VQIIGGFFTW…ECQLFEHWKT (252 aa)) constitute an ABC transporter 1 domain. Positions 688, 716, 720, and 721 each coordinate ATP. Ser720 is a Mg(2+) binding site. Residues 741 to 766 (SNLPDSEGEDPSSPERETAAGSDIRS) form a disordered region. Mg(2+) is bound at residue Gln775. Basic and acidic residues predominate over residues 939–950 (LEKETVMERKAS). The interval 939-962 (LEKETVMERKASEPSQGLPRAMSS) is disordered. The 295-residue stretch at 1013 to 1307 (LSLLVFSQLL…MVRNLADMEI (295 aa)) folds into the ABC transmembrane type-1 2 domain. Residues 1014 to 1031 (SLLVFSQLLKHMVLVAID) traverse the membrane as a helical segment. Over 1032–1067 (YWLAKWTDSALVLSPAARNCSLSQECDLDQSVYAMV) the chain is Extracellular. N-linked (GlcNAc...) asparagine glycosylation occurs at Asn1050. A helical transmembrane segment spans residues 1068-1084 (FTLLCSLGIVLCLVTSV). Residues 1085–1143 (TVEWTGLKVAKRLHRSLLNRIILAPMRFFETTPLGSILNRFSSDCNTIDQHIPSTLECL) lie on the Cytoplasmic side of the membrane. Residues 1144-1161 (SRSTLLCVSALTVISYVT) form a helical membrane-spanning segment. Pro1162 is a topological domain (extracellular). Residues 1163–1175 (VFLVALLPLAVVC) form a helical membrane-spanning segment. Residues 1176–1249 (YFIQKYFRVA…FLTAANRWLE (74 aa)) are Cytoplasmic-facing. The helical transmembrane segment at 1250–1265 (VCMEYIGACVVLIAAA) threads the bilayer. Over 1266–1281 (TSISNSLHRELSAGLV) the chain is Extracellular. Residues 1282-1297 (GLGLTYALMVSNYLNW) form a helical membrane-spanning segment. Topologically, residues 1298–1582 (MVRNLADMEI…VFASFVRADK (285 aa)) are cytoplasmic. The ABC transporter 2 domain maps to 1345–1579 (IQIQNLSVRY…KDSVFASFVR (235 aa)). ADP-binding residues include Thr1381, Gly1382, Gly1384, Lys1385, Ser1386, and Ser1387. Ser1483 serves as a coordination point for ATP.

The protein belongs to the ABC transporter superfamily. ABCC family. Conjugate transporter (TC 3.A.1.208) subfamily. Forms an heterooctamer with KCNJ11; four ABCC8/SUR1 molecules interact with one KCNJ11 homotetramer.

Its subcellular location is the cell membrane. With respect to regulation, KATP channels are regulated by cytoplasmic ATP/ADP ratios; ATP inhibits the channel by closing the pore, while ADP activates the channel. Activated by phosphatidylinositol 4,5-biphosphate (PtdIns(4,5)P2). Regulator subunit of pancreatic ATP-sensitive potassium channel (KATP), playing a major role in the regulation of insulin release. In pancreatic cells, it forms KATP channels with KCNJ11; KCNJ11 forms the channel pore while ABCC8 is required for activation and regulation. The chain is ATP-binding cassette sub-family C member 8 (ABCC8) from Cricetus cricetus (Black-bellied hamster).